Reading from the N-terminus, the 108-residue chain is Small ribosomal subunit protein bS6 (108 aa).

Belongs to the bacterial ribosomal protein bS6 family.

Binds together with bS18 to 16S ribosomal RNA. The sequence is that of Small ribosomal subunit protein bS6 from Nostoc sp. (strain PCC 7120 / SAG 25.82 / UTEX 2576).